A 353-amino-acid chain; its full sequence is Phospho-N-acetylmuramoyl-pentapeptide-transferase (353 aa).

Transmembrane regions (helical) follow at residues 24-44, 66-86, 88-108, 129-149, 160-180, 192-212, 229-249, 256-276, 281-301, and 330-350; these read LGFF…ILWA, TPTM…VLCA, LSNL…FVGF, FGML…KGLD, PLFE…FLST, GLAS…VYVA, VGEL…FLWY, VFMG…NAIV, ILLV…ILQV, and KVIV…LLSL.

This sequence belongs to the glycosyltransferase 4 family. MraY subfamily. The cofactor is Mg(2+).

Its subcellular location is the cell inner membrane. The enzyme catalyses UDP-N-acetyl-alpha-D-muramoyl-L-alanyl-gamma-D-glutamyl-meso-2,6-diaminopimeloyl-D-alanyl-D-alanine + di-trans,octa-cis-undecaprenyl phosphate = di-trans,octa-cis-undecaprenyl diphospho-N-acetyl-alpha-D-muramoyl-L-alanyl-D-glutamyl-meso-2,6-diaminopimeloyl-D-alanyl-D-alanine + UMP. It participates in cell wall biogenesis; peptidoglycan biosynthesis. Its function is as follows. Catalyzes the initial step of the lipid cycle reactions in the biosynthesis of the cell wall peptidoglycan: transfers peptidoglycan precursor phospho-MurNAc-pentapeptide from UDP-MurNAc-pentapeptide onto the lipid carrier undecaprenyl phosphate, yielding undecaprenyl-pyrophosphoryl-MurNAc-pentapeptide, known as lipid I. In Helicobacter pylori (strain J99 / ATCC 700824) (Campylobacter pylori J99), this protein is Phospho-N-acetylmuramoyl-pentapeptide-transferase.